The following is a 119-amino-acid chain: Protein TusC (119 aa).

It belongs to the DsrF/TusC family. In terms of assembly, heterohexamer, formed by a dimer of trimers. The hexameric TusBCD complex contains 2 copies each of TusB, TusC and TusD. The TusBCD complex interacts with TusE.

It localises to the cytoplasm. In terms of biological role, part of a sulfur-relay system required for 2-thiolation of 5-methylaminomethyl-2-thiouridine (mnm(5)s(2)U) at tRNA wobble positions. This Escherichia coli O45:K1 (strain S88 / ExPEC) protein is Protein TusC.